We begin with the raw amino-acid sequence, 279 residues long: Putative carbamate hydrolase RutD (279 aa).

Positions 23-126 (PVVVLISGLG…LVSVNGWLRI (104 aa)) constitute an AB hydrolase-1 domain.

Belongs to the AB hydrolase superfamily. Hydrolase RutD family.

The catalysed reaction is carbamate + 2 H(+) = NH4(+) + CO2. Involved in pyrimidine catabolism. May facilitate the hydrolysis of carbamate, a reaction that can also occur spontaneously. This Escherichia coli O17:K52:H18 (strain UMN026 / ExPEC) protein is Putative carbamate hydrolase RutD.